A 772-amino-acid polypeptide reads, in one-letter code: Lon protease (772 aa).

Positions 6–200 (YPTLPLKNTV…LMHRYLNHEV (195 aa)) constitute a Lon N-terminal domain. Residue 352 to 359 (GPPGVGKT) participates in ATP binding. Residues 588-769 (QLAPGVAAGL…EEVLAEAIPD (182 aa)) enclose the Lon proteolytic domain. Catalysis depends on residues S675 and K718.

Belongs to the peptidase S16 family. Homohexamer. Organized in a ring with a central cavity.

It localises to the cytoplasm. The enzyme catalyses Hydrolysis of proteins in presence of ATP.. Functionally, ATP-dependent serine protease that mediates the selective degradation of mutant and abnormal proteins as well as certain short-lived regulatory proteins. Required for cellular homeostasis and for survival from DNA damage and developmental changes induced by stress. Degrades polypeptides processively to yield small peptide fragments that are 5 to 10 amino acids long. Binds to DNA in a double-stranded, site-specific manner. This chain is Lon protease, found in Nitrosococcus oceani (strain ATCC 19707 / BCRC 17464 / JCM 30415 / NCIMB 11848 / C-107).